The primary structure comprises 698 residues: Elongation factor G (698 aa).

The tr-type G domain maps to 8–284 (ANVRNIGIMA…AVVDFLPSPL (277 aa)). GTP is bound by residues 17-24 (AHIDAGKT), 81-85 (DTPGH), and 135-138 (NKLD). A disordered region spans residues 289 to 309 (IEGTGTDGETPLQRKPSTSEP).

This sequence belongs to the TRAFAC class translation factor GTPase superfamily. Classic translation factor GTPase family. EF-G/EF-2 subfamily.

The protein localises to the cytoplasm. In terms of biological role, catalyzes the GTP-dependent ribosomal translocation step during translation elongation. During this step, the ribosome changes from the pre-translocational (PRE) to the post-translocational (POST) state as the newly formed A-site-bound peptidyl-tRNA and P-site-bound deacylated tRNA move to the P and E sites, respectively. Catalyzes the coordinated movement of the two tRNA molecules, the mRNA and conformational changes in the ribosome. The sequence is that of Elongation factor G from Salinispora arenicola (strain CNS-205).